The chain runs to 659 residues: Interferon-induced GTP-binding protein Mx2 (659 aa).

The 274-residue stretch at 65 to 338 folds into the Dynamin-type G domain; sequence DLALPAIAVI…LISHICKSLP (274 aa). A G1 motif region spans residues 75-82; that stretch reads GDQSSGKS. 75–82 provides a ligand contact to GTP; it reads GDQSSGKS. Residues 100–102 are G2 motif; that stretch reads VTR. Positions 176–179 are G3 motif; that stretch reads DLPG. GTP is bound by residues 176–180 and 245–248; these read DLPGI and TKPD. Residues 245–248 are G4 motif; the sequence is TKPD. The tract at residues 277-280 is G5 motif; that stretch reads KCRG. The tract at residues 547–567 is disordered; sequence EAEEEERKHGKSRSSQSKNLQ. Residues 571–659 enclose the GED domain; sequence MDEIFQHLNA…AQRRLAKFPG (89 aa).

It belongs to the TRAFAC class dynamin-like GTPase superfamily. Dynamin/Fzo/YdjA family.

Its subcellular location is the cytoplasm. Its function is as follows. Interferon-induced dynamin-like GTPase with antiviral activity against vesicular stomatitis virus (VSV). This is Interferon-induced GTP-binding protein Mx2 (Mx2) from Rattus norvegicus (Rat).